The sequence spans 250 residues: Uracil-DNA glycosylase (250 aa).

The active-site Proton acceptor is the Asp-78.

This sequence belongs to the uracil-DNA glycosylase (UDG) superfamily. UNG family.

It localises to the cytoplasm. It carries out the reaction Hydrolyzes single-stranded DNA or mismatched double-stranded DNA and polynucleotides, releasing free uracil.. Functionally, excises uracil residues from the DNA which can arise as a result of misincorporation of dUMP residues by DNA polymerase or due to deamination of cytosine. In Albidiferax ferrireducens (strain ATCC BAA-621 / DSM 15236 / T118) (Rhodoferax ferrireducens), this protein is Uracil-DNA glycosylase.